The sequence spans 193 residues: Putative F-box protein At1g31072 (193 aa).

In terms of domain architecture, F-box spans 4–53 (EKTLDSIPIDVFLDIFSRLPAKSVGRSCCVSNRWASILGSQDFKELFLTM).

The chain is Putative F-box protein At1g31072 from Arabidopsis thaliana (Mouse-ear cress).